Here is a 121-residue protein sequence, read N- to C-terminus: Lysozyme (121 aa).

The 121-residue stretch at 1-121 folds into the C-type lysozyme domain; sequence KTFTRCELVQ…NKPLPDISKC (121 aa). Cystine bridges form between C6–C121, C27–C110, C62–C76, and C72–C90. Catalysis depends on residues E32 and D50.

The protein belongs to the glycosyl hydrolase 22 family.

It catalyses the reaction Hydrolysis of (1-&gt;4)-beta-linkages between N-acetylmuramic acid and N-acetyl-D-glucosamine residues in a peptidoglycan and between N-acetyl-D-glucosamine residues in chitodextrins.. In terms of biological role, lysozymes have primarily a bacteriolytic function; those in tissues and body fluids are associated with the monocyte-macrophage system and enhance the activity of immunoagents. This is Lysozyme from Galleria mellonella (Greater wax moth).